Consider the following 182-residue polypeptide: uncharacterized protein (182 aa).

The protein localises to the mitochondrion. This is an uncharacterized protein from Schizosaccharomyces pombe (strain 972 / ATCC 24843) (Fission yeast).